Here is a 790-residue protein sequence, read N- to C-terminus: MTIIQRSTSLNNIINEKLGKIIVASNTLPITVTKFNETPLFGSPLSASRESITSSFGMSEPSRDRESKIQIQINGHPFPTQSALETLKAKDEIEDWLWIGWSHCEVNEDEEPMLNQAIKEFSPHFEHVFLNPRQFENYYKGYCKNGLWLLLHYQMNFIRMQSEWWEEYVGVNQMFAEKIASVWRPSDIIWIHDYHLMLVPQMLRQLLPPEASIGFFFHAPFPSYELFRILPNRKELLKGILSSNLIGFQSFEYVRHFKSSCARLLDLEVHPKGLEIFEDGSTHFTKLQVYPIGVDYNDFAKNLNLPEVSSRVESLRKIFKGKKVVVARDRLDQIEGVPRKLEVFEQLLNDHPEYIGKLVFIQIYEPTVEEGDETDEQKILHKTVNEMVGRINGKFGKLSFNPIEYINKKISYEELSALYKLADIALITPIRDGMNLTSHEYVVCQKDNFGVLILSEFAGAARCLGGSIIVNPFSKKEIMEAIIEALNMSMHDRKLKHQINYNYVLANTSSFWGKRFLCDLNEATQKEIMETSVPRANFQEIEDSYKKAKVRVFFLDYDGTLTPLVRLPSQAMPSKQLIDVLSKLTEDRRNEVYVISGRDRSSLEKWLGHLPIGMSCEHGVFTRQPGENQPWTESPNAEVQWKDTVLSIMQDFEDRTPGSMTETKQVNITWHYRNADPDFGQFQAKELIAQLRSVANKYPLDILSGKKAIEVKPIGINKGEIVKMILQKIDADFILCIGDDKTDEDMFKALYNVPSFTIRVCGDLEESTKARGVVESSSEVLTLLNRLSLS.

The protein in the N-terminal section; belongs to the glycosyltransferase 20 family. This sequence in the C-terminal section; belongs to the trehalose phosphatase family.

The catalysed reaction is D-glucose 6-phosphate + UDP-alpha-D-glucose = alpha,alpha-trehalose 6-phosphate + UDP + H(+). Its function is as follows. Synthesizes trehalose 6-phosphate, the precursor for the production of trehalose, the main carbohydrate storage reserve of the dormant spore. Trehalose accumulates in both prestalk and prespore cells and then is rapidly metabolized during terminal differentiation of stalk cells, while being stored in spores, where it serves as the principal energy and carbon source for germination. The polypeptide is Alpha,alpha-trehalose-phosphate synthase [UDP-forming] B (tpsB) (Dictyostelium discoideum (Social amoeba)).